A 305-amino-acid polypeptide reads, in one-letter code: MVEENSRVLIVLPYTPPSATLQRIIGQTIPFLRECQSQLDIVIVPEFKTSFQLDSALGKMYSITRDVLLGYGMINSGINIIFNNIHFVESNLQWKVVLLPQESTFETWKLELGQGQYHSIEHYALHDNIMEEIEGPKDANKFHVTALGGTFDHIHDGHKILLSVSTFITSQRLICGITCDELLQNKKYKELIEPYDTRCRHVHQFIKLLKPDLSVELVPLRDVCGPTGKVPEIECLVVSRETVSGAETVNKTRIEKGMSPLAVHVVNVLGGREEDGWSEKLSSTEIRRLLKSSASPTCTPQNPCV.

It belongs to the eukaryotic CoaD family.

The protein resides in the cytoplasm. It localises to the nucleus. It catalyses the reaction (R)-4'-phosphopantetheine + ATP + H(+) = 3'-dephospho-CoA + diphosphate. Reversibly transfers an adenylyl group from ATP to 4'-phosphopantetheine, yielding dephospho-CoA (dPCoA) and pyrophosphate. Plays a role in the physiological regulation of the intracellular CoA concentration. This Saccharomyces cerevisiae (strain ATCC 204508 / S288c) (Baker's yeast) protein is Phosphopantetheine adenylyltransferase (CAB4).